The sequence spans 300 residues: Diaminopimelate epimerase (300 aa).

The substrate site is built by Asn15, Gln47, and Asn67. The active-site Proton donor is Cys76. Residues 77 to 78, Asn163, Asn197, and 215 to 216 contribute to the substrate site; these read GN and ER. The active-site Proton acceptor is the Cys224. A substrate-binding site is contributed by 225–226; sequence GS. A disordered region spans residues 275–300; it reads SGTFDPATGEWSRDAQNDKPTDRGAA. The segment covering 285–300 has biased composition (basic and acidic residues); that stretch reads WSRDAQNDKPTDRGAA.

Belongs to the diaminopimelate epimerase family. In terms of assembly, homodimer.

Its subcellular location is the cytoplasm. The catalysed reaction is (2S,6S)-2,6-diaminopimelate = meso-2,6-diaminopimelate. Its pathway is amino-acid biosynthesis; L-lysine biosynthesis via DAP pathway; DL-2,6-diaminopimelate from LL-2,6-diaminopimelate: step 1/1. In terms of biological role, catalyzes the stereoinversion of LL-2,6-diaminopimelate (L,L-DAP) to meso-diaminopimelate (meso-DAP), a precursor of L-lysine and an essential component of the bacterial peptidoglycan. This chain is Diaminopimelate epimerase, found in Brucella anthropi (strain ATCC 49188 / DSM 6882 / CCUG 24695 / JCM 21032 / LMG 3331 / NBRC 15819 / NCTC 12168 / Alc 37) (Ochrobactrum anthropi).